The primary structure comprises 443 residues: Deoxyguanosinetriphosphate triphosphohydrolase-like protein (443 aa).

The region spanning 66–259 (RLTHSLEAAQ…MELADDIAYG (194 aa)) is the HD domain.

The protein belongs to the dGTPase family. Type 2 subfamily.

The sequence is that of Deoxyguanosinetriphosphate triphosphohydrolase-like protein from Vibrio vulnificus (strain CMCP6).